We begin with the raw amino-acid sequence, 774 residues long: Ion-translocating oxidoreductase complex subunit C (774 aa).

4Fe-4S ferredoxin-type domains lie at 359–389 (ELPE…QQLH) and 399–428 (QLLA…VQYY). 8 residues coordinate [4Fe-4S] cluster: cysteine 369, cysteine 372, cysteine 375, cysteine 379, cysteine 408, cysteine 411, cysteine 414, and cysteine 418. Residues 453–490 (EQRQARLRRDEERRAAERAQRAEKAALARAAQAEREEA) are compositionally biased toward basic and acidic residues. Positions 453 to 493 (EQRQARLRRDEERRAAERAQRAEKAALARAAQAEREEAAPA) are disordered.

Belongs to the 4Fe4S bacterial-type ferredoxin family. RnfC subfamily. As to quaternary structure, the complex is composed of six subunits: RnfA, RnfB, RnfC, RnfD, RnfE and RnfG. It depends on [4Fe-4S] cluster as a cofactor.

It is found in the cell inner membrane. Part of a membrane-bound complex that couples electron transfer with translocation of ions across the membrane. This is Ion-translocating oxidoreductase complex subunit C from Pseudomonas aeruginosa (strain ATCC 15692 / DSM 22644 / CIP 104116 / JCM 14847 / LMG 12228 / 1C / PRS 101 / PAO1).